Reading from the N-terminus, the 93-residue chain is uncharacterized protein (93 aa).

This is an uncharacterized protein from Schizosaccharomyces pombe (strain 972 / ATCC 24843) (Fission yeast).